We begin with the raw amino-acid sequence, 458 residues long: MLKEYKSVQEVVGPLMIVEGVEGIKYEELVEIQTQTGEKRRGRVLEIDGDRAMIQLFEGSAGINLKDTTVRFLGKPLELGVSEDMIGRIFDGLGNPIDKGPKIIPEKRVDINGSPINPVSRDYPSEFIQTGISTIDGLNTLVRGQKLPIFSGSGLPHNNVAAQIARQAKVLGDDAKFAVVFAAMGITFEEAQFFIDDFTKTGAIDRAVLFINLANDPAIERISTPRMALTCAEYLAFEKGMHVLVILTDLTNYAEALREVSAARKEVPGRRGYPGYLYTDLSQIYERAGKIKGKPGSITQIPILTMPEDDITHPIPDLTGYITEGQIILSRELYKSGIQPPIFVIPSLSRLKDKGIGRGKTREDHADTMNQIYAGYASGREARELAVILGDTALSDADKAFAKFAENFDKEYVNQGYETNRSILETLDLGWKLLKVIPHAELKRIRTEYIDKYLADKD.

This sequence belongs to the ATPase alpha/beta chains family.

Produces ATP from ADP in the presence of a proton gradient across the membrane. The V-type beta chain is a regulatory subunit. The sequence is that of V-type ATP synthase beta chain from Fusobacterium nucleatum subsp. nucleatum (strain ATCC 25586 / DSM 15643 / BCRC 10681 / CIP 101130 / JCM 8532 / KCTC 2640 / LMG 13131 / VPI 4355).